The primary structure comprises 72 residues: Translation initiation factor IF-1 (72 aa).

Positions 1–72 (MAKEGAIEVE…TRGRIVYRYK (72 aa)) constitute an S1-like domain.

The protein belongs to the IF-1 family. As to quaternary structure, component of the 30S ribosomal translation pre-initiation complex which assembles on the 30S ribosome in the order IF-2 and IF-3, IF-1 and N-formylmethionyl-tRNA(fMet); mRNA recruitment can occur at any time during PIC assembly.

It is found in the cytoplasm. One of the essential components for the initiation of protein synthesis. Stabilizes the binding of IF-2 and IF-3 on the 30S subunit to which N-formylmethionyl-tRNA(fMet) subsequently binds. Helps modulate mRNA selection, yielding the 30S pre-initiation complex (PIC). Upon addition of the 50S ribosomal subunit IF-1, IF-2 and IF-3 are released leaving the mature 70S translation initiation complex. The sequence is that of Translation initiation factor IF-1 from Corynebacterium efficiens (strain DSM 44549 / YS-314 / AJ 12310 / JCM 11189 / NBRC 100395).